The primary structure comprises 360 residues: Photosystem II protein D1 (360 aa).

3 helical membrane-spanning segments follow: residues 29 to 46, 118 to 133, and 142 to 156; these read YIGWFGVLMIPTLLTATS, HFLTGVACYIGREWEL, and WISVAFTAPVAAAAA. Histidine 118 is a binding site for chlorophyll a. Position 126 (tyrosine 126) interacts with pheophytin a. Positions 170 and 189 each coordinate [CaMn4O5] cluster. Residues 197–218 traverse the membrane as a helical segment; the sequence is FHQLGVAGVFGGSLFSAMHGSL. Histidine 198 contacts chlorophyll a. A quinone-binding positions include histidine 215 and 264 to 265; that span reads SF. Histidine 215 is a Fe cation binding site. Histidine 272 is a binding site for Fe cation. The chain crosses the membrane as a helical span at residues 274-288; sequence FLGLWPVVGIWLTAL. Positions 332, 333, 342, and 344 each coordinate [CaMn4O5] cluster. A propeptide spanning residues 345 to 360 is cleaved from the precursor; that stretch reads SGESLPVALTAPAVNG.

This sequence belongs to the reaction center PufL/M/PsbA/D family. In terms of assembly, PSII is composed of 1 copy each of membrane proteins PsbA, PsbB, PsbC, PsbD, PsbE, PsbF, PsbH, PsbI, PsbJ, PsbK, PsbL, PsbM, PsbT, PsbX, PsbY, PsbZ, Psb30/Ycf12, at least 3 peripheral proteins of the oxygen-evolving complex and a large number of cofactors. It forms dimeric complexes. The cofactor is The D1/D2 heterodimer binds P680, chlorophylls that are the primary electron donor of PSII, and subsequent electron acceptors. It shares a non-heme iron and each subunit binds pheophytin, quinone, additional chlorophylls, carotenoids and lipids. D1 provides most of the ligands for the Mn4-Ca-O5 cluster of the oxygen-evolving complex (OEC). There is also a Cl(-1) ion associated with D1 and D2, which is required for oxygen evolution. The PSII complex binds additional chlorophylls, carotenoids and specific lipids.. Tyr-161 forms a radical intermediate that is referred to as redox-active TyrZ, YZ or Y-Z. Post-translationally, C-terminally processed by CTPA; processing is essential to allow assembly of the oxygen-evolving complex and thus photosynthetic growth.

Its subcellular location is the plastid. It localises to the chloroplast thylakoid membrane. It carries out the reaction 2 a plastoquinone + 4 hnu + 2 H2O = 2 a plastoquinol + O2. In terms of biological role, photosystem II (PSII) is a light-driven water:plastoquinone oxidoreductase that uses light energy to abstract electrons from H(2)O, generating O(2) and a proton gradient subsequently used for ATP formation. It consists of a core antenna complex that captures photons, and an electron transfer chain that converts photonic excitation into a charge separation. The D1/D2 (PsbA/PsbD) reaction center heterodimer binds P680, the primary electron donor of PSII as well as several subsequent electron acceptors. The chain is Photosystem II protein D1 from Pyropia yezoensis (Susabi-nori).